A 223-amino-acid chain; its full sequence is von Willebrand factor C domain-containing protein 2-like (223 aa).

A signal peptide spans 1 to 21 (MGPFLPAICVVLLALNAAVSP). 2 VWFC domains span residues 51 to 110 (KGCV…PECK) and 114 to 172 (NFCE…PICK).

It is found in the secreted. The protein resides in the synapse. Its function is as follows. May play a role in bone differentiation and matrix mineralization. May play a role in neural development. The chain is von Willebrand factor C domain-containing protein 2-like (vwc2l) from Danio rerio (Zebrafish).